The sequence spans 505 residues: L-arabinose isomerase (505 aa).

Residues glutamate 310, glutamate 337, histidine 354, and histidine 453 each contribute to the Mn(2+) site.

Belongs to the arabinose isomerase family. Requires Mn(2+) as cofactor.

It catalyses the reaction beta-L-arabinopyranose = L-ribulose. It participates in carbohydrate degradation; L-arabinose degradation via L-ribulose; D-xylulose 5-phosphate from L-arabinose (bacterial route): step 1/3. Its function is as follows. Catalyzes the conversion of L-arabinose to L-ribulose. In Clavibacter sepedonicus (Clavibacter michiganensis subsp. sepedonicus), this protein is L-arabinose isomerase.